Here is a 379-residue protein sequence, read N- to C-terminus: Cytochrome b (379 aa).

Transmembrane regions (helical) follow at residues 33–53, 77–98, 113–133, and 178–198; these read FGSL…FLAM, WILR…YIHV, WNIG…GYVL, and FFAF…VHLL. Heme b is bound by residues His83 and His97. Heme b contacts are provided by His182 and His196. His201 provides a ligand contact to a ubiquinone. The next 4 membrane-spanning stretches (helical) occupy residues 226–246, 288–308, 320–340, and 347–367; these read IKDI…VLFS, LGGV…PVLH, LSQC…WIGG, and YVIX…XXXX.

This sequence belongs to the cytochrome b family. In terms of assembly, the cytochrome bc1 complex contains 11 subunits: 3 respiratory subunits (MT-CYB, CYC1 and UQCRFS1), 2 core proteins (UQCRC1 and UQCRC2) and 6 low-molecular weight proteins (UQCRH/QCR6, UQCRB/QCR7, UQCRQ/QCR8, UQCR10/QCR9, UQCR11/QCR10 and a cleavage product of UQCRFS1). This cytochrome bc1 complex then forms a dimer. Heme b is required as a cofactor.

Its subcellular location is the mitochondrion inner membrane. Functionally, component of the ubiquinol-cytochrome c reductase complex (complex III or cytochrome b-c1 complex) that is part of the mitochondrial respiratory chain. The b-c1 complex mediates electron transfer from ubiquinol to cytochrome c. Contributes to the generation of a proton gradient across the mitochondrial membrane that is then used for ATP synthesis. This is Cytochrome b (MT-CYB) from Myotis goudotii (Malagasy mouse-eared bat).